The sequence spans 236 residues: Small ribosomal subunit protein uS2c (236 aa).

It belongs to the universal ribosomal protein uS2 family.

The protein resides in the plastid. It localises to the chloroplast. The chain is Small ribosomal subunit protein uS2c (rps2) from Nymphaea alba (White water-lily).